The following is an 86-amino-acid chain: UPF0473 protein Clos_1662 (86 aa).

It belongs to the UPF0473 family.

The chain is UPF0473 protein Clos_1662 from Alkaliphilus oremlandii (strain OhILAs) (Clostridium oremlandii (strain OhILAs)).